A 113-amino-acid polypeptide reads, in one-letter code: Integration host factor subunit alpha (113 aa).

The tract at residues 59–80 (GNFQVRDKPPRPGRNPKTGETI) is disordered.

The protein belongs to the bacterial histone-like protein family. As to quaternary structure, heterodimer of an alpha and a beta chain.

Its function is as follows. This protein is one of the two subunits of integration host factor, a specific DNA-binding protein that functions in genetic recombination as well as in transcriptional and translational control. The chain is Integration host factor subunit alpha from Bordetella bronchiseptica (strain ATCC BAA-588 / NCTC 13252 / RB50) (Alcaligenes bronchisepticus).